The sequence spans 205 residues: Proteasome subunit beta type-3 (205 aa).

Belongs to the peptidase T1B family. The 26S proteasome consists of a 20S proteasome core and two 19S regulatory subunits. The 20S proteasome core is composed of 28 subunits that are arranged in four stacked rings, resulting in a barrel-shaped structure. The two end rings are each formed by seven alpha subunits, and the two central rings are each formed by seven beta subunits. The catalytic chamber with the active sites is on the inside of the barrel.

It is found in the cytoplasm. Its subcellular location is the nucleus. Functionally, non-catalytic component of the proteasome, a multicatalytic proteinase complex which is characterized by its ability to cleave peptides with Arg, Phe, Tyr, Leu, and Glu adjacent to the leaving group at neutral or slightly basic pH. The proteasome has an ATP-dependent proteolytic activity. The chain is Proteasome subunit beta type-3 (psmB3) from Dictyostelium discoideum (Social amoeba).